A 208-amino-acid polypeptide reads, in one-letter code: Large ribosomal subunit protein bL25 (208 aa).

Belongs to the bacterial ribosomal protein bL25 family. CTC subfamily. Part of the 50S ribosomal subunit; part of the 5S rRNA/L5/L18/L25 subcomplex. Contacts the 5S rRNA. Binds to the 5S rRNA independently of L5 and L18.

In terms of biological role, this is one of the proteins that binds to the 5S RNA in the ribosome where it forms part of the central protuberance. The chain is Large ribosomal subunit protein bL25 from Burkholderia pseudomallei (strain K96243).